The sequence spans 268 residues: Enoyl-[acyl-carrier-protein] reductase [NADH] (268 aa).

NAD(+) contacts are provided by residues 20-21 (SI), 64-65 (DV), and 95-96 (IA). Tyr157 is a binding site for substrate. NAD(+) contacts are provided by Lys164 and Ile193.

This sequence belongs to the short-chain dehydrogenases/reductases (SDR) family. FabI subfamily. In terms of assembly, homodimer. Homotetramer.

The catalysed reaction is a 2,3-saturated acyl-[ACP] + NAD(+) = a (2E)-enoyl-[ACP] + NADH + H(+). The enzyme catalyses a 2,3-saturated acyl-CoA + NAD(+) = a (2E)-enoyl-CoA + NADH + H(+). It functions in the pathway lipid metabolism; mycolic acid biosynthesis. Functionally, enoyl-ACP reductase of the type II fatty acid syntase (FAS-II) system, which is involved in the biosynthesis of mycolic acids, a major component of mycobacterial cell walls. Catalyzes the NADH-dependent reduction of the double bond of 2-trans-enoyl-[acyl-carrier protein], an essential step in the fatty acid elongation cycle of the FAS-II pathway. Shows preference for long-chain fatty acyl thioester substrates, and can also use 2-trans-enoyl-CoAs as alternative substrates. The mycobacterial FAS-II system utilizes the products of the FAS-I system as primers to extend fatty acyl chain lengths up to C56, forming the meromycolate chain that serves as the precursor for final mycolic acids. This is Enoyl-[acyl-carrier-protein] reductase [NADH] from Mycobacterium avium.